The following is a 521-amino-acid chain: GRAS family protein RAD1 (521 aa).

The GRAS domain occupies 137–520 (DGSCADGMRL…KPIVAVSCWK (384 aa)). Positions 144–212 (MRLVQLLIAC…PIGNNSAGSD (69 aa)) are leucine repeat I (LRI). Residues 231–301 (FKLVYENCPH…HRVRRLRITA (71 aa)) are VHIID. The short motif at 262-266 (LHVVD) is the VHIID element. A leucine repeat II (LRII) region spans residues 311–343 (VIGEELSIYAKNLGIHLEFSIVEKNLENLKPKD). Positions 352 to 443 (LVVNSILQLH…QFYFAEEIKN (92 aa)) are PFYRE. Residues 446–520 (SCEGPLRMER…KPIVAVSCWK (75 aa)) are SAW.

This sequence belongs to the GRAS family. In terms of assembly, interacts with RAM1. Interacts with NSP2.

The protein localises to the nucleus. In terms of biological role, transcription factor acting as a regulator of arbuscular mycorrhiza (AM)-related genes (e.g. STR). Required for the morphogenesis of arbuscules upon symbiosis with AM fungi (e.g. Glomus versiforme). Also involved in restricting mycorrhizal colonization of the root meristem. The chain is GRAS family protein RAD1 from Medicago truncatula (Barrel medic).